The sequence spans 367 residues: Quinolinate synthase (367 aa).

2 residues coordinate iminosuccinate: His-45 and Ser-62. A [4Fe-4S] cluster-binding site is contributed by Cys-109. Iminosuccinate-binding positions include 140 to 142 (YVN) and Ser-161. [4Fe-4S] cluster is bound at residue Cys-229. Residues 255-257 (HPE) and Thr-272 contribute to the iminosuccinate site. Residue Cys-319 coordinates [4Fe-4S] cluster.

It belongs to the quinolinate synthase family. Type 3 subfamily. Requires [4Fe-4S] cluster as cofactor.

The protein localises to the cytoplasm. The enzyme catalyses iminosuccinate + dihydroxyacetone phosphate = quinolinate + phosphate + 2 H2O + H(+). Its pathway is cofactor biosynthesis; NAD(+) biosynthesis; quinolinate from iminoaspartate: step 1/1. Its function is as follows. Catalyzes the condensation of iminoaspartate with dihydroxyacetone phosphate to form quinolinate. This is Quinolinate synthase from Geobacillus sp. (strain WCH70).